The chain runs to 1060 residues: Carbamoyl phosphate synthase large chain (1060 aa).

The interval 1 to 400 (MPRDESINKV…SLNKAIRSLD (400 aa)) is carboxyphosphate synthetic domain. Residues Arg-127, Arg-167, Gly-173, Gly-174, Gln-206, Val-208, Glu-213, Gly-240, Ile-241, His-242, Gln-283, and Glu-297 each coordinate ATP. An ATP-grasp 1 domain is found at 131–326 (DSFMKKLNEP…IAKIAAKIAV (196 aa)). Mg(2+)-binding residues include Gln-283, Glu-297, and Asn-299. Mn(2+)-binding residues include Gln-283, Glu-297, and Asn-299. Positions 401–539 (IGADGFTETP…YGCYDLEDEV (139 aa)) are oligomerization domain. Residues 540–926 (EVSDRRKVLI…YKSQLSASMD (387 aa)) form a carbamoyl phosphate synthetic domain region. In terms of domain architecture, ATP-grasp 2 spans 664 to 858 (TEVLNKLGIP…LAKMAARLMM (195 aa)). 10 residues coordinate ATP: Arg-700, Lys-739, Leu-741, Glu-746, Gly-771, Val-772, His-773, Ser-774, Gln-814, and Glu-829. Positions 814, 829, and 831 each coordinate Mg(2+). Residues Gln-814, Glu-829, and Asn-831 each coordinate Mn(2+). The MGS-like domain maps to 925 to 1060 (MDLLNEGKVF…VKSLDEYHGM (136 aa)). The interval 927–1060 (LLNEGKVFIS…VKSLDEYHGM (134 aa)) is allosteric domain.

This sequence belongs to the CarB family. Composed of two chains; the small (or glutamine) chain promotes the hydrolysis of glutamine to ammonia, which is used by the large (or ammonia) chain to synthesize carbamoyl phosphate. Tetramer of heterodimers (alpha,beta)4. The cofactor is Mg(2+). It depends on Mn(2+) as a cofactor.

It carries out the reaction hydrogencarbonate + L-glutamine + 2 ATP + H2O = carbamoyl phosphate + L-glutamate + 2 ADP + phosphate + 2 H(+). The enzyme catalyses hydrogencarbonate + NH4(+) + 2 ATP = carbamoyl phosphate + 2 ADP + phosphate + 2 H(+). The protein operates within amino-acid biosynthesis; L-arginine biosynthesis; carbamoyl phosphate from bicarbonate: step 1/1. It functions in the pathway pyrimidine metabolism; UMP biosynthesis via de novo pathway; (S)-dihydroorotate from bicarbonate: step 1/3. Functionally, large subunit of the glutamine-dependent carbamoyl phosphate synthetase (CPSase). CPSase catalyzes the formation of carbamoyl phosphate from the ammonia moiety of glutamine, carbonate, and phosphate donated by ATP, constituting the first step of 2 biosynthetic pathways, one leading to arginine and/or urea and the other to pyrimidine nucleotides. The large subunit (synthetase) binds the substrates ammonia (free or transferred from glutamine from the small subunit), hydrogencarbonate and ATP and carries out an ATP-coupled ligase reaction, activating hydrogencarbonate by forming carboxy phosphate which reacts with ammonia to form carbamoyl phosphate. This Methanothermobacter thermautotrophicus (strain ATCC 29096 / DSM 1053 / JCM 10044 / NBRC 100330 / Delta H) (Methanobacterium thermoautotrophicum) protein is Carbamoyl phosphate synthase large chain.